We begin with the raw amino-acid sequence, 664 residues long: Degenerin del-1 (664 aa).

Over 1–67 (MARKYIDILK…IFTTSLYWVR (67 aa)) the chain is Cytoplasmic. Residues 68 to 88 (FLWVVVSLVCICLCMYSFSHV) traverse the membrane as a helical segment. Residues 89-607 (KDKYDRKEKI…WFNLMADMGG (519 aa)) lie on the Extracellular side of the membrane. Residues Asn-241, Asn-300, Asn-394, Asn-508, and Asn-562 are each glycosylated (N-linked (GlcNAc...) asparagine). The chain crosses the membrane as a helical span at residues 608-628 (QAGLFLGASIMSVIEFLFFAV). Over 629-664 (RTLGIACKPRRWRQKTELLRAEELNDAEKGVSTNNN) the chain is Cytoplasmic.

Belongs to the amiloride-sensitive sodium channel (TC 1.A.6) family.

The protein localises to the membrane. Probable sodium channel subunit. This Caenorhabditis elegans protein is Degenerin del-1 (del-1).